The primary structure comprises 264 residues: Probable amino-acid-binding protein YxeM (264 aa).

An N-terminal signal peptide occupies residues 1–20 (MKMKKWTVLVVAALLAVLSA). Cysteine 21 is lipidated: N-palmitoyl cysteine. The S-diacylglycerol cysteine moiety is linked to residue cysteine 21.

The protein belongs to the bacterial solute-binding protein 3 family. The complex is composed of two ATP-binding proteins (YxeO), two transmembrane proteins (YxeN) and a solute-binding protein (YxeM).

Its subcellular location is the cell membrane. The protein localises to the membrane raft. Its function is as follows. Probably part of the ABC transporter complex YxeMNO that could be involved in amino-acid import. May transport S-methylcysteine. This chain is Probable amino-acid-binding protein YxeM (yxeM), found in Bacillus subtilis (strain 168).